The primary structure comprises 184 residues: Large ribosomal subunit protein uL6 (184 aa).

This sequence belongs to the universal ribosomal protein uL6 family. In terms of assembly, part of the 50S ribosomal subunit.

Its function is as follows. This protein binds to the 23S rRNA, and is important in its secondary structure. It is located near the subunit interface in the base of the L7/L12 stalk, and near the tRNA binding site of the peptidyltransferase center. This is Large ribosomal subunit protein uL6 from Thermotoga maritima (strain ATCC 43589 / DSM 3109 / JCM 10099 / NBRC 100826 / MSB8).